The sequence spans 115 residues: CRISPR-associated endoribonuclease Cas2 (115 aa).

Asp22 serves as a coordination point for Mg(2+).

It belongs to the CRISPR-associated endoribonuclease Cas2 protein family. In terms of assembly, homodimer, forms a heterotetramer with a Cas1 homodimer. Mg(2+) is required as a cofactor.

CRISPR (clustered regularly interspaced short palindromic repeat), is an adaptive immune system that provides protection against mobile genetic elements (viruses, transposable elements and conjugative plasmids). CRISPR clusters contain sequences complementary to antecedent mobile elements and target invading nucleic acids. CRISPR clusters are transcribed and processed into CRISPR RNA (crRNA). Functions as a ssRNA-specific endoribonuclease. Involved in the integration of spacer DNA into the CRISPR cassette. The protein is CRISPR-associated endoribonuclease Cas2 of Flavobacterium psychrophilum (strain ATCC 49511 / DSM 21280 / CIP 103535 / JIP02/86).